The sequence spans 368 residues: Histidinol-phosphate aminotransferase (368 aa).

At Lys226 the chain carries N6-(pyridoxal phosphate)lysine.

This sequence belongs to the class-II pyridoxal-phosphate-dependent aminotransferase family. Histidinol-phosphate aminotransferase subfamily. In terms of assembly, homodimer. Pyridoxal 5'-phosphate is required as a cofactor.

The catalysed reaction is L-histidinol phosphate + 2-oxoglutarate = 3-(imidazol-4-yl)-2-oxopropyl phosphate + L-glutamate. It functions in the pathway amino-acid biosynthesis; L-histidine biosynthesis; L-histidine from 5-phospho-alpha-D-ribose 1-diphosphate: step 7/9. The protein is Histidinol-phosphate aminotransferase of Colwellia psychrerythraea (strain 34H / ATCC BAA-681) (Vibrio psychroerythus).